Reading from the N-terminus, the 211-residue chain is Protein-methionine-sulfoxide reductase heme-binding subunit MsrQ (211 aa).

Transmembrane regions (helical) follow at residues 17-37 (LAGL…GLGA), 82-102 (LWCF…ELGV), 116-136 (PYLT…FTST), and 153-173 (FVYL…KIIS).

Belongs to the MsrQ family. As to quaternary structure, heterodimer of a catalytic subunit (MsrP) and a heme-binding subunit (MsrQ). Requires FMN as cofactor. Heme b is required as a cofactor.

The protein localises to the cell inner membrane. Functionally, part of the MsrPQ system that repairs oxidized periplasmic proteins containing methionine sulfoxide residues (Met-O), using respiratory chain electrons. Thus protects these proteins from oxidative-stress damage caused by reactive species of oxygen and chlorine generated by the host defense mechanisms. MsrPQ is essential for the maintenance of envelope integrity under bleach stress, rescuing a wide series of structurally unrelated periplasmic proteins from methionine oxidation, including the primary periplasmic chaperone SurA and the lipoprotein Pal. MsrQ provides electrons for reduction to the reductase catalytic subunit MsrP, using the quinone pool of the respiratory chain. This chain is Protein-methionine-sulfoxide reductase heme-binding subunit MsrQ, found in Shigella sonnei (strain Ss046).